The sequence spans 514 residues: Chromosomal replication initiator protein DnaA (514 aa).

Residues 1-90 are domain I, interacts with DnaA modulators; the sequence is MSVELWQQCV…KRSRTPRAAI (90 aa). The interval 91-177 is domain II; sequence VPSQTHVAPP…QVEGALKHTS (87 aa). The segment at 178–394 is domain III, AAA+ region; the sequence is YLNRTFTFEN…GALKRVIAHS (217 aa). The ATP site is built by G222, G224, K225, and T226. The tract at residues 395–514 is domain IV, binds dsDNA; sequence HFMGRPITIE…YKNLLRTLTT (120 aa).

The protein belongs to the DnaA family. In terms of assembly, oligomerizes as a right-handed, spiral filament on DNA at oriC.

Its subcellular location is the cytoplasm. Functionally, plays an essential role in the initiation and regulation of chromosomal replication. ATP-DnaA binds to the origin of replication (oriC) to initiate formation of the DNA replication initiation complex once per cell cycle. Binds the DnaA box (a 9 base pair repeat at the origin) and separates the double-stranded (ds)DNA. Forms a right-handed helical filament on oriC DNA; dsDNA binds to the exterior of the filament while single-stranded (ss)DNA is stabiized in the filament's interior. The ATP-DnaA-oriC complex binds and stabilizes one strand of the AT-rich DNA unwinding element (DUE), permitting loading of DNA polymerase. After initiation quickly degrades to an ADP-DnaA complex that is not apt for DNA replication. Binds acidic phospholipids. The chain is Chromosomal replication initiator protein DnaA from Pseudomonas aeruginosa (strain LESB58).